The sequence spans 1401 residues: DNA-directed RNA polymerase subunit beta'' (1401 aa).

Cysteine 224, cysteine 294, cysteine 301, and cysteine 304 together coordinate Zn(2+).

The protein belongs to the RNA polymerase beta' chain family. RpoC2 subfamily. In plastids the minimal PEP RNA polymerase catalytic core is composed of four subunits: alpha, beta, beta', and beta''. When a (nuclear-encoded) sigma factor is associated with the core the holoenzyme is formed, which can initiate transcription. It depends on Zn(2+) as a cofactor.

It is found in the plastid. The protein resides in the chloroplast. The catalysed reaction is RNA(n) + a ribonucleoside 5'-triphosphate = RNA(n+1) + diphosphate. Its function is as follows. DNA-dependent RNA polymerase catalyzes the transcription of DNA into RNA using the four ribonucleoside triphosphates as substrates. The chain is DNA-directed RNA polymerase subunit beta'' from Nymphaea alba (White water-lily).